Reading from the N-terminus, the 158-residue chain is PRA1 family protein 2 (158 aa).

A run of 4 helical transmembrane segments spans residues 36–58 (NLNF…TLFT), 62–79 (LLVA…LFFV), 88–108 (FAVL…VIVI), and 113–133 (GLTL…HSAL).

The protein belongs to the PRA1 family.

The protein resides in the membrane. Its function is as follows. May act as a general Rab protein regulator. This is PRA1 family protein 2 (prafB) from Dictyostelium discoideum (Social amoeba).